Here is a 402-residue protein sequence, read N- to C-terminus: Multidrug resistance protein MdtH (402 aa).

Residues 1–12 are Cytoplasmic-facing; the sequence is MSRVSQARNLGK. Residues 13-33 form a helical membrane-spanning segment; it reads YFLLIDNMLVVLGFFVVFPLI. Topologically, residues 34–98 are periplasmic; sequence SIRFIDQMGW…GFATMGIAHE (65 aa). Residues 99–116 form a helical membrane-spanning segment; it reads PWLLWFSCFLSGLGGTLF. The Cytoplasmic segment spans residues 117–138; sequence DPPRSALVVKLIRPEQRGRFFS. The chain crosses the membrane as a helical span at residues 139–159; it reads LLMMQDSAGAVIGALLGSWLL. Over 160–164 the chain is Periplasmic; sequence QYDFR. The chain crosses the membrane as a helical span at residues 165-185; that stretch reads LVCATGAILFILCALFNAWLL. Topologically, residues 186 to 213 are cytoplasmic; the sequence is PAWKLSTVRTPVREGMRRVMSDKRFVTY. A helical membrane pass occupies residues 214–234; it reads VLTLAGYYMLAVQVMLMLPIM. Residues 235–243 are Periplasmic-facing; that stretch reads VNDIAGSPA. A helical membrane pass occupies residues 244–264; sequence AVKWMYAIEACLSLTLLYPIA. At 265 to 276 the chain is on the cytoplasmic side; it reads RWSEKRFRLEHR. The chain crosses the membrane as a helical span at residues 277 to 297; it reads LMAGLLVMSLSMIPIGMVGNL. Over 298–299 the chain is Periplasmic; the sequence is QQ. Residues 300–320 form a helical membrane-spanning segment; sequence LFTLICAFYIGSVIAEPARET. At 321 to 339 the chain is on the cytoplasmic side; it reads LSASLADARARGSYMGFSR. The helical transmembrane segment at 340–360 threads the bilayer; that stretch reads LGLAIGGAIGYIGGGWLFDMG. Residues 361 to 367 are Periplasmic-facing; that stretch reads KALTQPE. Residues 368-388 form a helical membrane-spanning segment; it reads LPWMMLGIIGFITFLALGWQF. Over 389-402 the chain is Cytoplasmic; that stretch reads SHKRTPRRMLEPGA.

The protein belongs to the major facilitator superfamily. DHA1 family. MdtH (TC 2.A.1.2.21) subfamily.

It is found in the cell inner membrane. In Salmonella paratyphi C (strain RKS4594), this protein is Multidrug resistance protein MdtH.